The primary structure comprises 2968 residues: Trinucleotide repeat-containing gene 18 protein (2968 aa).

2 disordered regions span residues 1–24 and 139–261; these read MDGR…SGLA and GSPL…LAER. Low complexity predominate over residues 139 to 150; it reads GSPLLSQLGQPS. Composition is skewed to basic and acidic residues over residues 221–233 and 243–260; these read GKKD…EEAS and QEAR…RLAE. Ser-263 carries the post-translational modification Phosphoserine. Residues 304 to 322 are compositionally biased toward basic and acidic residues; it reads GAKEAARQDEGARLLRRTE. Disordered regions lie at residues 304-356 and 381-488; these read GAKE…PAGV and FDER…PAAQ. Pro residues predominate over residues 327–351; the sequence is GPRPCPSPLPPPPAPPKGPPAPPAA. Basic and acidic residues-rich tracts occupy residues 395–405, 419–431, and 464–479; these read RDARAREREAG, PLDR…EKNS, and ELLK…ERAP. At Ser-611 the chain carries Phosphoserine. 8 disordered regions span residues 612-679, 941-1002, 1019-1055, 1106-1190, 1212-1236, 1279-1306, 1497-1566, and 1687-1855; these read PFGG…EVRH, EHRA…SPVA, PAYA…PENV, DADG…MATP, SCAE…PGRT, LAQV…GQCP, KQRE…SDDY, and SLKS…RERA. Lys-620 is covalently cross-linked (Glycyl lysine isopeptide (Lys-Gly) (interchain with G-Cter in SUMO2)). Composition is skewed to basic and acidic residues over residues 651–660 and 941–955; these read LKRDPERPES and EHRA…KRGL. A coiled-coil region spans residues 916–949; that stretch reads LQQQAAQALELQRSAQLVQERLKAQEHRAEMEEK. Composition is skewed to low complexity over residues 966–983 and 1019–1031; these read AGPG…AGPA and PAYA…SSHP. Over residues 1032 to 1043 the composition is skewed to pro residues; sequence TSPPPASPPPTP. Residues 1046–1055 show a composition bias toward basic and acidic residues; it reads TRKEEAPENV. Phosphoserine is present on residues Ser-1127 and Ser-1136. The segment covering 1142-1162 has biased composition (basic and acidic residues); the sequence is EPLREGPEEEPLAEREVKAEV. A compositionally biased stretch (pro residues) spans 1171–1181; the sequence is ELPPLESPLPL. Residues 1481-1516 are a coiled coil; sequence LDFRMRLAEVQRQYKEKQRELVKLQRRRDSEDRREE. A compositionally biased stretch (basic and acidic residues) spans 1497–1519; sequence KQRELVKLQRRRDSEDRREEPHR. Residues 1520–1534 are compositionally biased toward basic residues; that stretch reads SLARRGPGRPRKRTH. Residue Ser-1540 is modified to Phosphoserine. A compositionally biased stretch (low complexity) spans 1549–1563; that stretch reads GHSSGKLSSKSLLTS. Residues 1816–1842 are compositionally biased toward acidic residues; it reads SSEESFDQDESSEEEDEEEELEEEDEA. Phosphoserine is present on residues Ser-1857 and Ser-1863. Disordered regions lie at residues 1912–2148 and 2295–2771; these read YTDS…LTPA and LLVP…RLPS. Composition is skewed to basic and acidic residues over residues 1957–1968 and 1993–2004; these read SPDKAKLAVEKG and LWTRRRSERIFL. The segment covering 2007–2024 has biased composition (low complexity); sequence ASAAAPAPVSTAPATKTS. Over residues 2034-2046 the composition is skewed to basic and acidic residues; the sequence is PRKDAGRAKDRKD. Residues 2069-2085 show a composition bias toward low complexity; sequence ALPSEARAPHASSLTAA. Over residues 2093-2103 the composition is skewed to basic and acidic residues; the sequence is KGKEVKKENRG. Thr-2146 is subject to Phosphothreonine. Basic and acidic residues predominate over residues 2307 to 2316; the sequence is TSKDTGEGKD. The span at 2329–2338 shows a compositional bias: basic residues; the sequence is ARGRGRKPSA. The span at 2365-2374 shows a compositional bias: low complexity; that stretch reads EPSSTPGSKK. Over residues 2375–2384 the composition is skewed to basic and acidic residues; it reads SPPEPVDKRA. Residues 2390 to 2401 show a composition bias toward pro residues; it reads RPAPPQPSPAPP. Over residues 2411 to 2433 the composition is skewed to low complexity; sequence PFAELPAPATSLAPAPLITMPAT. Basic and acidic residues-rich tracts occupy residues 2441–2468 and 2477–2487; these read RAAE…DHEG and AKEALLLREDP. Composition is skewed to low complexity over residues 2559 to 2580 and 2603 to 2671; these read SSSS…SGSE and SAAS…SSSS. A compositionally biased stretch (acidic residues) spans 2673-2685; sequence TDEDSSCSSDDEA. Positions 2723 to 2736 are enriched in pro residues; sequence APQPQAPPPQPTQP. Phosphoserine is present on Ser-2771. The BAH domain maps to 2817–2962; that stretch reads EMIRIGDCAV…PTTGMIFSTD (146 aa).

In Homo sapiens (Human), this protein is Trinucleotide repeat-containing gene 18 protein.